A 266-amino-acid chain; its full sequence is MNEPHLLIDAGNSRIKWALADAQRTLVETGAFGHTRDGGADPDWSTLPRPRGAWISNVAGADVAARLDTLLDARWPGLPRTTIRSRHTQCGVTNGYTTPDQLGSDRWAGLIGAHAAFPGEHLLIATFGTATTLEALRADGRFTGGLIAPGWALMMRALGTHTAQLPTLTTDIASGLLAGAQAEPFQVDTPRSLSAGCLYAQAGLIERAWRDLADAWQAPVRLVLAGGAADDVARALTLPHTRHDALILSGLALIAAEAAAATAAQA.

9–16 (DAGNSRIK) lines the ATP pocket. Substrate contacts are provided by residues tyrosine 96 and 103 to 106 (GSDR). Aspartate 105 serves as the catalytic Proton acceptor. Threonine 129 serves as a coordination point for ATP. Threonine 189 contributes to the substrate binding site.

The protein belongs to the type III pantothenate kinase family. Homodimer. Requires NH4(+) as cofactor. K(+) is required as a cofactor.

Its subcellular location is the cytoplasm. The catalysed reaction is (R)-pantothenate + ATP = (R)-4'-phosphopantothenate + ADP + H(+). Its pathway is cofactor biosynthesis; coenzyme A biosynthesis; CoA from (R)-pantothenate: step 1/5. Functionally, catalyzes the phosphorylation of pantothenate (Pan), the first step in CoA biosynthesis. The polypeptide is Type III pantothenate kinase (Burkholderia lata (strain ATCC 17760 / DSM 23089 / LMG 22485 / NCIMB 9086 / R18194 / 383)).